A 230-amino-acid chain; its full sequence is RNA polymerase sigma factor FliA (230 aa).

The sigma-70 factor domain-2 stretch occupies residues 6-78; that stretch reads LWQRYVPLVR…MLDELRSRDW (73 aa). The Interaction with polymerase core subunit RpoC signature appears at 33 to 36; that stretch reads DLLQ. Residues 86–156 form a sigma-70 factor domain-3 region; sequence NAREVASAMQ…VEPMLEGHED (71 aa). Positions 175–223 are sigma-70 factor domain-4; the sequence is AIEALPEREKMVLTLYYQEELNLKEIGAVLEVGESRVSQLHSQAIKRLR. Positions 197-216 form a DNA-binding region, H-T-H motif; sequence LKEIGAVLEVGESRVSQLHS.

This sequence belongs to the sigma-70 factor family. FliA subfamily.

It is found in the cytoplasm. In terms of biological role, sigma factors are initiation factors that promote the attachment of RNA polymerase to specific initiation sites and are then released. This sigma factor controls the expression of flagella-related genes. This chain is RNA polymerase sigma factor FliA, found in Yersinia enterocolitica.